A 614-amino-acid polypeptide reads, in one-letter code: RNA polymerase sigma factor RpoD (614 aa).

The interval 178 to 222 (THIGSDLSQSERDKDDSKDDSKDDDEDEEEEGPKGPDPEESKERF) is disordered. Over residues 186 to 198 (QSERDKDDSKDDS) the composition is skewed to basic and acidic residues. Positions 199-208 (KDDDEDEEEE) are enriched in acidic residues. A compositionally biased stretch (basic and acidic residues) spans 209-222 (GPKGPDPEESKERF). A sigma-70 factor domain-2 region spans residues 380-450 (MVEANLRLVI…TRSIADQART (71 aa)). The Interaction with polymerase core subunit RpoC motif lies at 404-407 (DLIQ). The sigma-70 factor domain-3 stretch occupies residues 459-535 (ETINKLNRIS…DTTLELPLDS (77 aa)). The tract at residues 548 to 601 (VLAGLTAREAKVLRMRFGIDMNTDHTLEEVGKQFDVTRERIRQIEAKALRKLRH) is sigma-70 factor domain-4. A DNA-binding region (H-T-H motif) is located at residues 574-593 (LEEVGKQFDVTRERIRQIEA).

This sequence belongs to the sigma-70 factor family. RpoD/SigA subfamily. In terms of assembly, interacts transiently with the RNA polymerase catalytic core.

The protein resides in the cytoplasm. In terms of biological role, sigma factors are initiation factors that promote the attachment of RNA polymerase to specific initiation sites and are then released. This sigma factor is the primary sigma factor during exponential growth. The polypeptide is RNA polymerase sigma factor RpoD (Shewanella violacea (strain JCM 10179 / CIP 106290 / LMG 19151 / DSS12)).